Reading from the N-terminus, the 177-residue chain is Bifunctional protein PyrR (177 aa).

The PRPP-binding signature appears at 99-111; it reads VILIDDVLYTGRT.

It belongs to the purine/pyrimidine phosphoribosyltransferase family. PyrR subfamily. As to quaternary structure, homodimer and homohexamer; in equilibrium.

The catalysed reaction is UMP + diphosphate = 5-phospho-alpha-D-ribose 1-diphosphate + uracil. Its function is as follows. Regulates transcriptional attenuation of the pyrimidine nucleotide (pyr) operon by binding in a uridine-dependent manner to specific sites on pyr mRNA. This disrupts an antiterminator hairpin in the RNA and favors formation of a downstream transcription terminator, leading to a reduced expression of downstream genes. Functionally, also displays a weak uracil phosphoribosyltransferase activity which is not physiologically significant. The chain is Bifunctional protein PyrR from Pediococcus pentosaceus (strain ATCC 25745 / CCUG 21536 / LMG 10740 / 183-1w).